Here is a 329-residue protein sequence, read N- to C-terminus: Phosphate import ATP-binding protein PstB (329 aa).

In terms of domain architecture, ABC transporter spans 83 to 325 (FEIRNFNFWY…PKQKATNSYI (243 aa)). Residue 116-123 (GKSGCGKS) participates in ATP binding.

The protein belongs to the ABC transporter superfamily. Phosphate importer (TC 3.A.1.7) family. The complex is composed of two ATP-binding proteins (PstB), two transmembrane proteins (PstC and PstA) and a solute-binding protein (PstS).

The protein resides in the cell membrane. It catalyses the reaction phosphate(out) + ATP + H2O = ADP + 2 phosphate(in) + H(+). In terms of biological role, part of the ABC transporter complex PstSACB involved in phosphate import. Responsible for energy coupling to the transport system. This Mycoplasma genitalium (strain ATCC 33530 / DSM 19775 / NCTC 10195 / G37) (Mycoplasmoides genitalium) protein is Phosphate import ATP-binding protein PstB.